The following is a 423-amino-acid chain: Ornithine cyclodeaminase (423 aa).

The NAD(+) site is built by N241, A242, D320, T352, M353, L354, H355, D373, D396, and V397.

Belongs to the AgrE/ArgZ ornithine cyclodeaminase family. NAD(+) is required as a cofactor.

It carries out the reaction L-ornithine = L-proline + NH4(+). In terms of biological role, catalyzes the conversion of ornithine to proline, with the release of ammonia. This chain is Ornithine cyclodeaminase, found in Methanocaldococcus jannaschii (strain ATCC 43067 / DSM 2661 / JAL-1 / JCM 10045 / NBRC 100440) (Methanococcus jannaschii).